The chain runs to 272 residues: Shikimate dehydrogenase (NADP(+)) (272 aa).

Shikimate contacts are provided by residues 14–16 (SKS) and threonine 61. Catalysis depends on lysine 65, which acts as the Proton acceptor. Position 77 (glutamate 77) interacts with NADP(+). The shikimate site is built by asparagine 86 and aspartate 102. NADP(+)-binding positions include 126 to 130 (GAGGA), 149 to 154 (NRTASR), and methionine 213. Tyrosine 215 provides a ligand contact to shikimate. Glycine 237 is an NADP(+) binding site.

This sequence belongs to the shikimate dehydrogenase family. In terms of assembly, homodimer.

The enzyme catalyses shikimate + NADP(+) = 3-dehydroshikimate + NADPH + H(+). It participates in metabolic intermediate biosynthesis; chorismate biosynthesis; chorismate from D-erythrose 4-phosphate and phosphoenolpyruvate: step 4/7. Its function is as follows. Involved in the biosynthesis of the chorismate, which leads to the biosynthesis of aromatic amino acids. Catalyzes the reversible NADPH linked reduction of 3-dehydroshikimate (DHSA) to yield shikimate (SA). The polypeptide is Shikimate dehydrogenase (NADP(+)) (Salmonella schwarzengrund (strain CVM19633)).